A 289-amino-acid chain; its full sequence is Splicing factor C9orf78 homolog (289 aa).

Disordered stretches follow at residues 1 to 30 (MRITGKTFRRRRADSESEEDEQESEEVRLK) and 85 to 111 (RGKDKVSEEEDLHLGTSFSAETNRRDE). An interaction with SNRNP200 region spans residues 5 to 58 (GKTFRRRRADSESEEDEQESEEVRLKLEETREVQNLRKRPNGVSAAALLVGEKV). Serine 15 and serine 17 each carry phosphoserine. At tyrosine 147 the chain carries Phosphotyrosine. Residues 232–283 (LNAPIRRNKEEPKARPLRVGDTEKPEPERSPPNRKRPANEKATDDYHYEKFK) are compositionally biased toward basic and acidic residues. The segment at 232 to 289 (LNAPIRRNKEEPKARPLRVGDTEKPEPERSPPNRKRPANEKATDDYHYEKFKKMNRRY) is disordered. Residue threonine 253 is modified to Phosphothreonine. Serine 261 is subject to Phosphoserine.

It belongs to the TLS1 family. As to quaternary structure, component of the spliceosome. Interacts with SNRNP200; the interaction is direct. Interacts with PRPF8.

The protein localises to the nucleus. It is found in the chromosome. The protein resides in the centromere. Functionally, plays a role in pre-mRNA splicing by promoting usage of the upstream 3'-splice site at alternative NAGNAG splice sites; these are sites featuring alternative acceptor motifs separated by only a few nucleotides. May also modulate exon inclusion events. PPlays a role in spliceosomal remodeling by displacing WBP4 from SNRNP200 and may act to inhibit SNRNP200 helicase activity. Binds U5 snRNA. Required for proper chromosome segregation. Not required for splicing of shelterin components. This is Splicing factor C9orf78 homolog from Mus musculus (Mouse).